Here is a 309-residue protein sequence, read N- to C-terminus: DDRGK domain-containing protein 1 (309 aa).

Residues 1 to 2 (MD) are Lumenal-facing. A helical transmembrane segment spans residues 3–23 (LIILVGIAVALLVVIVTLYLL). Residues 24 to 309 (QKKNAAPETK…ISAGGGEASS (286 aa)) lie on the Cytoplasmic side of the membrane. 2 disordered regions span residues 32 to 53 (TKVA…VPRR) and 79 to 175 (ALPA…KEER). Residues 87–96 (DHEDEGQVDG) show a composition bias toward acidic residues. Positions 107 to 175 (LDEKMGAKKR…DAERLAKEER (69 aa)) are enriched in basic and acidic residues. A coiled-coil region spans residues 120-177 (EAKEQKRLQREQELHDREQRKVKEAKEEAERKQQEDLEAEAERKRVDAERLAKEERER).

The protein belongs to the DDRGK1 family. As to quaternary structure, interacts with Atg9; the interaction is transient.

The protein localises to the endoplasmic reticulum membrane. Its function is as follows. Substrate adapter for ufmylation, the covalent attachment of the ubiquitin-like modifier UFM1 to substrate proteins. Required for ufmylation of Atg9; protects the nervous system during aging, possibly by stabilizing Atg9 and supporting its function. This Drosophila melanogaster (Fruit fly) protein is DDRGK domain-containing protein 1.